A 299-amino-acid chain; its full sequence is 4-diphosphocytidyl-2-C-methyl-D-erythritol kinase (299 aa).

Lys-10 is an active-site residue. An ATP-binding site is contributed by 96-106 (PVAGGMAGGSA). The active site involves Asp-138.

Belongs to the GHMP kinase family. IspE subfamily.

The catalysed reaction is 4-CDP-2-C-methyl-D-erythritol + ATP = 4-CDP-2-C-methyl-D-erythritol 2-phosphate + ADP + H(+). It functions in the pathway isoprenoid biosynthesis; isopentenyl diphosphate biosynthesis via DXP pathway; isopentenyl diphosphate from 1-deoxy-D-xylulose 5-phosphate: step 3/6. In terms of biological role, catalyzes the phosphorylation of the position 2 hydroxy group of 4-diphosphocytidyl-2C-methyl-D-erythritol. The chain is 4-diphosphocytidyl-2-C-methyl-D-erythritol kinase from Streptomyces coelicolor (strain ATCC BAA-471 / A3(2) / M145).